Reading from the N-terminus, the 130-residue chain is D-ribose pyranase (130 aa).

Residue H20 is the Proton donor of the active site. Residues D28, H97, and 119–121 (YAN) contribute to the substrate site.

Belongs to the RbsD / FucU family. RbsD subfamily. As to quaternary structure, homodecamer.

The protein resides in the cytoplasm. It catalyses the reaction beta-D-ribopyranose = beta-D-ribofuranose. It functions in the pathway carbohydrate metabolism; D-ribose degradation; D-ribose 5-phosphate from beta-D-ribopyranose: step 1/2. In terms of biological role, catalyzes the interconversion of beta-pyran and beta-furan forms of D-ribose. In Heliobacterium modesticaldum (strain ATCC 51547 / Ice1), this protein is D-ribose pyranase.